The following is a 2038-amino-acid chain: Non-reducing polyketide synthase ZEA1 (2038 aa).

The interval 9–246 is N-terminal acylcarrier protein transacylase domain (SAT); it reads LLFGDQTDSW…NELNIHALQH (238 aa). In terms of domain architecture, Ketosynthase family 3 (KS3) spans 364–794; that stretch reads PGRIAIVGMA…GGNACILLED (431 aa). Active-site for beta-ketoacyl synthase activity residues include cysteine 537, histidine 672, and histidine 711. Positions 888 to 1172 are malonyl-CoA:ACP transacylase (MAT) domain; it reads VFVFTGQGSH…VCSSFVRATL (285 aa). The For acyl/malonyl transferase activity role is filled by serine 979. Positions 1221 to 1572 are product template (PT) domain; the sequence is SLLNLPTYAW…HFHEVENAVL (352 aa). The interval 1254 to 1405 is N-terminal hotdog fold; that stretch reads HETFKANIST…GQLIQARWDK (152 aa). Residues 1254 to 1573 form the PKS/mFAS DH domain; it reads HETFKANIST…FHEVENAVLD (320 aa). Residues 1425–1573 are C-terminal hotdog fold; sequence ISHRLQPQIL…FHEVENAVLD (149 aa). The 78-residue stretch at 1616 to 1693 folds into the Carrier domain; that stretch reads QSDAHVLDSI…DLRRVFAPKS (78 aa). Serine 1653 is modified (O-(pantetheine 4'-phosphoryl)serine). Positions 1700 to 1738 are disordered; it reads NDLSRPSLVDDTSQALQSSGSESFDQPPTSVTSTSDSGS. Positions 1709-1737 are enriched in polar residues; the sequence is DDTSQALQSSGSESFDQPPTSVTSTSDSG. A thioesterase (TE) domain region spans residues 1778 to 1882; that stretch reads TGTIATYIHL…PRSKTVEDKN (105 aa). Catalysis depends on histidine 2021, which acts as the For thioesterase activity.

The protein operates within mycotoxin biosynthesis. In terms of biological role, non-reducing polyketide synthase; part of the gene cluster that mediates the biosynthesis of zearalenone (ZEA), a nonsteroid estrogen that is a contaminant of cereal grains and causes estrogenic disorders in humans and animals. The ZEA backbone is synthesized from a single acetyl-CoA molecule and eight malonyl-CoA molecules. The reducing polyketide synthase ZEA2 is proposed to synthesize a reduced hexaketide intermediate by using different combinations of its reductive domains during each round of condensation. The hexaketide thioester is then transacylated to the non-reducing polyketide synthase ZEA1 and is further condensed with three malonyl-CoAs without reductive tailoring to yield a mixed reduced/unreduced nonaketide. ZEA1 must be able to interact with ZEA2 to facilitate starter-unit acyltransfer and initiate polyketide biosynthesis. ZEA1 also mediates the required C2-C7 cyclization to form the resorcylate core and catalyzes the formation of the macrolactone. ZEA1 exhibits broad starter-unit specificities toward fatty acyl-CoAs ranging in sizes between C6 and C16 and displays the highest activity toward decanoyl-CoA. ZEB1 is then responsible for the chemical conversion of beta-zearalenonol (beta-ZOL) to ZEA in the biosynthetic pathway. In Gibberella zeae (strain ATCC MYA-4620 / CBS 123657 / FGSC 9075 / NRRL 31084 / PH-1) (Wheat head blight fungus), this protein is Non-reducing polyketide synthase ZEA1.